A 125-amino-acid chain; its full sequence is Holo-[acyl-carrier-protein] synthase (125 aa).

Mg(2+)-binding residues include D8 and E57.

This sequence belongs to the P-Pant transferase superfamily. AcpS family. It depends on Mg(2+) as a cofactor.

The protein localises to the cytoplasm. It catalyses the reaction apo-[ACP] + CoA = holo-[ACP] + adenosine 3',5'-bisphosphate + H(+). Functionally, transfers the 4'-phosphopantetheine moiety from coenzyme A to a Ser of acyl-carrier-protein. This chain is Holo-[acyl-carrier-protein] synthase, found in Solibacter usitatus (strain Ellin6076).